Here is a 705-residue protein sequence, read N- to C-terminus: Prolyl endopeptidase (705 aa).

Positions M1 to A20 are cleaved as a signal peptide. Active-site charge relay system residues include S556 and H675.

The protein belongs to the peptidase S9A family. In terms of assembly, monomer.

It is found in the periplasm. It carries out the reaction Hydrolysis of Pro-|-Xaa &gt;&gt; Ala-|-Xaa in oligopeptides.. Functionally, cleaves peptide bonds on the C-terminal side of prolyl residues within peptides that are up to approximately 30 amino acids long. Has an absolute requirement for an X-Pro bond in the trans configuration immediately preceding the Pro-Y scissible bond. This is Prolyl endopeptidase from Elizabethkingia miricola (Chryseobacterium miricola).